Consider the following 251-residue polypeptide: MSLPATFDLTPEDAQLLLAANVHLGSKNVQVHQEPYVFKTRPDGVNVVNVGKTWEKIVLAARIIAAIPNPEDVVAISSRTYGQRAVLKFSAHTGATAIAGRFTPGSFTNYITRSFKEPRLVIVTDPRSDAQAIKESSYVNIPVIALTDLDSPSEYVDVAIPCNNKGKHSIGLIWYLLAREVLRLRGSLVDRTQPWSIMPDLYFYRDPEEVDQQVAEEATAAADEDVKEEVAEEQTEAADWAEGNTEEVASW.

S2 carries the N-acetylserine modification. The tract at residues Q213 to W251 is disordered. The segment covering A222 to E236 has biased composition (acidic residues).

The protein belongs to the universal ribosomal protein uS2 family. In terms of assembly, component of the small ribosomal subunit. Mature ribosomes consist of a small (40S) and a large (60S) subunit. The 40S subunit contains about 33 different proteins and 1 molecule of RNA (18S). The 60S subunit contains about 49 different proteins and 3 molecules of RNA (25S, 5.8S and 5S). Interacts with RPS21.

The protein localises to the cytoplasm. In terms of biological role, required for the assembly and/or stability of the 40S ribosomal subunit. Required for the processing of the 20S rRNA-precursor to mature 18S rRNA in a late step of the maturation of 40S ribosomal subunits. The chain is Small ribosomal subunit protein uS2 from Lachancea thermotolerans (strain ATCC 56472 / CBS 6340 / NRRL Y-8284) (Yeast).